Here is a 599-residue protein sequence, read N- to C-terminus: mRNA export factor MEX67 (599 aa).

Residue Ser-2 is modified to N-acetylserine. 2 LRR repeats span residues 163 to 184 (IVES…STLA) and 189 to 210 (NLKN…EVWK). The 39-residue stretch at 224–262 (NPITTDKLYRTEMLRLFPKLVVLDNVIVRDEQKLQTVYS) folds into the LRRCT domain. In terms of domain architecture, NTF2 spans 280-467 (SSTDFATNFL…VIIASDLLTV (188 aa)). Positions 408–439 (KPELESNKKTGKNNYQKNRRYNHGYNSTSNNK) are disordered. In terms of domain architecture, TAP-C spans 546 to 599 (PVQLELLNKLHLETKLNAEYTFMLAEQSNWNYEVAIKGFQSSMNGIPREAFVQF).

Belongs to the NXF family. In terms of assembly, interacts with nucleoporin complex NUP84 and MTR2. Interacts with MIP6.

It is found in the nucleus. The protein resides in the cytoplasm. Functionally, involved in the export of mRNA from the nucleus to the cytoplasm. This is mRNA export factor MEX67 (MEX67) from Saccharomyces cerevisiae (strain ATCC 204508 / S288c) (Baker's yeast).